We begin with the raw amino-acid sequence, 224 residues long: TM2 domain-containing protein amaretto (224 aa).

A signal peptide spans 1–18 (MRIFYGLLAFLVARQHDA). Residues 19 to 154 (QAIQARSDKE…FLRAGVPCVR (136 aa)) are Extracellular-facing. N-linked (GlcNAc...) asparagine glycans are attached at residues Asn102 and Asn142. Residues 155 to 175 (YTDHYFVTTLIYSMLLGFLGM) traverse the membrane as a helical segment. Positions 157-205 (DHYFVTTLIYSMLLGFLGMDRFCLGQTGTAVGKLLTMGGVGVWWIIDVI) constitute a TM2 domain. Topologically, residues 176-189 (DRFCLGQTGTAVGK) are cytoplasmic. Residues 190–210 (LLTMGGVGVWWIIDVILLITN) form a helical membrane-spanning segment. Residues 211 to 224 (NLLPEDGSNWNPYV) lie on the Extracellular side of the membrane.

This sequence belongs to the TM2 family.

The protein resides in the membrane. In terms of biological role, positive regulator of Notch signaling. Maternal neurogenic factor involved in Notch signaling-dependent neuroectodermal specification during early embryogenesis. Functions cooperatively with amx/TM2D3 and bisc/TM2D1. The polypeptide is TM2 domain-containing protein amaretto (Drosophila melanogaster (Fruit fly)).